The primary structure comprises 274 residues: 2,3,4,5-tetrahydropyridine-2,6-dicarboxylate N-succinyltransferase (274 aa).

2 residues coordinate substrate: Arg-104 and Asp-141.

Belongs to the transferase hexapeptide repeat family. Homotrimer.

The protein resides in the cytoplasm. It carries out the reaction (S)-2,3,4,5-tetrahydrodipicolinate + succinyl-CoA + H2O = (S)-2-succinylamino-6-oxoheptanedioate + CoA. It functions in the pathway amino-acid biosynthesis; L-lysine biosynthesis via DAP pathway; LL-2,6-diaminopimelate from (S)-tetrahydrodipicolinate (succinylase route): step 1/3. This is 2,3,4,5-tetrahydropyridine-2,6-dicarboxylate N-succinyltransferase from Buchnera aphidicola subsp. Acyrthosiphon pisum (strain APS) (Acyrthosiphon pisum symbiotic bacterium).